The following is a 385-amino-acid chain: Glucans biosynthesis protein C (385 aa).

The next 10 membrane-spanning stretches (helical) occupy residues 17-37, 60-80, 91-111, 137-157, 173-193, 212-232, 239-259, 274-294, 311-331, and 338-358; these read AWLM…SHTW, MQVF…RYPL, VGIP…IMLQ, ISHL…VWIF, KFSM…YAVI, FIVM…LAFI, LFTT…VAYL, TESV…FSFG, ASLF…AYIT, and WLGF…LYEI.

The protein belongs to the acyltransferase 3 family. OpgC subfamily.

It localises to the cell membrane. Its pathway is glycan metabolism; osmoregulated periplasmic glucan (OPG) biosynthesis. In terms of biological role, necessary for the succinyl substitution of periplasmic glucans. Could catalyze the transfer of succinyl residues from the cytoplasmic side of the membrane to the nascent glucan backbones on the periplasmic side of the membrane. In Escherichia coli O45:K1 (strain S88 / ExPEC), this protein is Glucans biosynthesis protein C.